A 694-amino-acid polypeptide reads, in one-letter code: MSGGEVVCSGWLRKSPPEKKLKRYAWKRRWFVLRSGRLTGDPDVLEYYKNDHAKKPIRIIDLNLCQQVDAGLTFNKKEFENSYIFDINTIDRIFYLVADSEEEMNKWVRCICDICGFNPTEEDPVKPPGSSLQAPADLPLAINTAPPSTQADSSSATLPPPYQLINVPPHLETLGIQEDPQDYLLLINCQSKKPEPTRTHADSAKSTSSETDCNDNVPSHKNPASSQSKHGMNGFFQQQMIYDSPPSRAPSASVDSSLYNLPRSYSHDVLPKVSPSSTEADGELYVFNTPSGTSSVETQMRHVSISYDIPPTPGNTYQIPRTFPEGTLGQTSKLDTIPDIPPPRPPKPHPAHDRSPVETCSIPRTASDTDSSYCIPTAGMSPSRSNTISTVDLNKLRKDASSQDCYDIPRAFPSDRSSSLEGFHNHFKVKNVLTVGSVSSEELDENYVPMNPNSPPRQHSSSFTEPIQEANYVPMTPGTFDFSSFGMQVPPPAHMGFRSSPKTPPRRPVPVADCEPPPVDRNLKPDRKVKPAPLEIKPLPEWEELQAPVRSPITRSFARDSSRFPMSPRPDSVHSTTSSSDSHDSEENYVPMNPNLSSEDPNLFGSNSLDGGSSPMIKPKGDKQVEYLDLDLDSGKSTPPRKQKSSGSGSSVADERVDYVVVDQQKTLALKSTREAWTDGRQSTESETPAKSVK.

At serine 2 the chain carries N-acetylserine. One can recognise a PH domain in the interval glutamate 5–glycine 116. Disordered stretches follow at residues glutamate 122–leucine 164 and proline 194–glycine 231. The span at alanine 145 to threonine 157 shows a compositional bias: polar residues. Over residues proline 194–serine 203 the composition is skewed to basic and acidic residues. The span at alanine 204–glycine 231 shows a compositional bias: polar residues. Serine 251, serine 253, serine 266, and serine 304 each carry phosphoserine. Positions phenylalanine 323 to asparagine 386 are disordered. Residues isoleucine 362–asparagine 386 are compositionally biased toward polar residues. Residue threonine 387 is modified to Phosphothreonine. A phosphoserine mark is found at serine 402 and serine 454. Disordered stretches follow at residues alanine 493–alanine 532 and glutamate 544–arginine 656. Alanine 547 is modified (phosphoserine). Over residues proline 594–glycine 611 the composition is skewed to polar residues. Tyrosine 627 carries the post-translational modification Phosphotyrosine. Threonine 638 carries the post-translational modification Phosphothreonine. Serine 651 is modified (phosphoserine). Tyrosine 659 is modified (phosphotyrosine). Residues lysine 671–lysine 694 are disordered. Over residues serine 672–threonine 684 the composition is skewed to basic and acidic residues. Serine 683 is subject to Phosphoserine. Residues glutamate 685–lysine 694 are compositionally biased toward polar residues.

It belongs to the GAB family. Identified in a complex containing FRS2, GRB2, GAB1, PIK3R1 and SOS1. Forms a tripartite complex containing GAB1, METTL13 and SPRY2. Within the complex interacts with METTL13. Interacts with GRB2 and with other SH2-containing proteins. Interacts with phosphorylated LAT2. Interacts with PTPRJ. Interacts (phosphorylated) with PTPN11. Interacts with HCK. Post-translationally, phosphorylated in response to FGFR1 activation. Phosphorylated on tyrosine residue(s) by the epidermal growth factor receptor (EGFR) and the insulin receptor (INSR). Tyrosine phosphorylation of GAB1 mediates interaction with several proteins that contain SH2 domains. Phosphorylated on tyrosine residues by HCK upon IL6 signaling.

Adapter protein that plays a role in intracellular signaling cascades triggered by activated receptor-type kinases. Plays a role in FGFR1 signaling. Probably involved in signaling by the epidermal growth factor receptor (EGFR) and the insulin receptor (INSR). Involved in the MET/HGF-signaling pathway. The chain is GRB2-associated-binding protein 1 (GAB1) from Homo sapiens (Human).